Consider the following 726-residue polypeptide: Replication restart protein PriA (726 aa).

Isoleucine 234 contacts ATP. One can recognise a Helicase ATP-binding domain in the interval 234 to 373 (IQSVLYKGVQ…LHRKCFYIKL (140 aa)). The short motif at 316-319 (LEEH) is the DEAH box element. Zn(2+)-binding residues include cysteine 431, cysteine 434, cysteine 440, cysteine 443, cysteine 458, cysteine 461, cysteine 471, and cysteine 474.

This sequence belongs to the helicase family. PriA subfamily. In terms of assembly, component of the replication restart primosome. Zn(2+) serves as cofactor.

It catalyses the reaction Couples ATP hydrolysis with the unwinding of duplex DNA by translocating in the 3'-5' direction.. It carries out the reaction ATP + H2O = ADP + phosphate + H(+). In terms of biological role, initiates the restart of stalled replication forks, which reloads the replicative helicase on sites other than the origin of replication. Recognizes and binds to abandoned replication forks and remodels them to uncover a helicase loading site. Promotes assembly of the primosome at these replication forks. The protein is Replication restart protein PriA of Buchnera aphidicola subsp. Acyrthosiphon pisum (strain APS) (Acyrthosiphon pisum symbiotic bacterium).